Here is a 330-residue protein sequence, read N- to C-terminus: MKIRPVGITGLGMAVPERVLTNHDLERMVDTSDEWIRTRTGIRERRIAAPHEASSDYALRAAREAMAQAGVTPEQIDLIICATVTPDMPMPATAALVQAALGAHRAAAFDLSAACPGWIYGVVMAQQSIATGLYDCALVIGVELLSKMVNWQDRKTCVLFGDAAGAAVLQPVSEGRGILSSVLGAEGAGHCHLYTPAGGSRLPASPETVAQGLHYVHMNGPEVFKFAVRVMDEATVQVVEKAGLTVGDIDLLVPHQANVRIIDSAVKRLGLAPEKVVVNLDRYGNTSSASIPVALTEALTEGRVRDGDLVVCVSFGAGLVWGALALRWGR.

Residues Cys-115 and His-255 contribute to the active site. Residues 256–260 form an ACP-binding region; it reads QANVR. Asn-285 is an active-site residue.

It belongs to the thiolase-like superfamily. FabH family. Homodimer.

It is found in the cytoplasm. The enzyme catalyses malonyl-[ACP] + acetyl-CoA + H(+) = 3-oxobutanoyl-[ACP] + CO2 + CoA. It participates in lipid metabolism; fatty acid biosynthesis. Catalyzes the condensation reaction of fatty acid synthesis by the addition to an acyl acceptor of two carbons from malonyl-ACP. Catalyzes the first condensation reaction which initiates fatty acid synthesis and may therefore play a role in governing the total rate of fatty acid production. Possesses both acetoacetyl-ACP synthase and acetyl transacylase activities. Its substrate specificity determines the biosynthesis of branched-chain and/or straight-chain of fatty acids. This Symbiobacterium thermophilum (strain DSM 24528 / JCM 14929 / IAM 14863 / T) protein is Beta-ketoacyl-[acyl-carrier-protein] synthase III.